Here is a 150-residue protein sequence, read N- to C-terminus: Aspartate carbamoyltransferase regulatory chain (150 aa).

Zn(2+) is bound by residues Cys-105, Cys-110, Cys-133, and Cys-136.

The protein belongs to the PyrI family. Contains catalytic and regulatory chains. It depends on Zn(2+) as a cofactor.

Involved in allosteric regulation of aspartate carbamoyltransferase. The polypeptide is Aspartate carbamoyltransferase regulatory chain (Thermococcus sibiricus (strain DSM 12597 / MM 739)).